Here is a 171-residue protein sequence, read N- to C-terminus: Protein-export protein SecB (171 aa).

The protein belongs to the SecB family. In terms of assembly, homotetramer, a dimer of dimers. One homotetramer interacts with 1 SecA dimer.

It localises to the cytoplasm. Its function is as follows. One of the proteins required for the normal export of preproteins out of the cell cytoplasm. It is a molecular chaperone that binds to a subset of precursor proteins, maintaining them in a translocation-competent state. It also specifically binds to its receptor SecA. This is Protein-export protein SecB from Gluconacetobacter diazotrophicus (strain ATCC 49037 / DSM 5601 / CCUG 37298 / CIP 103539 / LMG 7603 / PAl5).